A 198-amino-acid chain; its full sequence is Transmembrane protein 17 (198 aa).

N-linked (GlcNAc...) asparagine glycans are attached at residues Asn-13 and Asn-23. Transmembrane regions (helical) follow at residues 45 to 65 (MSLYFNTYFFPLWWVSSIMML), 78 to 98 (FIVVTIIILITLIEAIRLYLG), 110 to 130 (LAGFWLLSLLLQLPLILFLLF), and 142 to 162 (AVHIIFTIFLTFQVVSAFLTL).

The protein belongs to the TMEM17 family. In terms of assembly, part of the tectonic-like complex (also named B9 complex).

It localises to the cell projection. Its subcellular location is the cilium membrane. Transmembrane component of the tectonic-like complex, a complex localized at the transition zone of primary cilia and acting as a barrier that prevents diffusion of transmembrane proteins between the cilia and plasma membranes. Required for ciliogenesis and sonic hedgehog/SHH signaling. This Bos taurus (Bovine) protein is Transmembrane protein 17 (TMEM17).